We begin with the raw amino-acid sequence, 288 residues long: MALFRKKDKYIRITPNNSLKGSVSHNVPEVPDELFAKCPACKHMIYKKDLGLAKICPTCSYNFRISAQERLTLTVDEGSFQELFTSIETKDPLRFPGYQEKLQKAKETTGLHEAVLTGKAMVKGQQIALAIMDSHFIMASMGTVVGEKITRLFELAIEENLPVVIFTASGGARMQEGIMSLMQMAKVSAAVKRHSNAGLFYLTILTDPTTGGVTASFAMEGDIILAEPQSLVGFAGRRVIETTVRENLPDDFQKAEFLQDHGFVDAIVKRTELRDKIAHLVAFHGGGQ.

In terms of domain architecture, CoA carboxyltransferase N-terminal spans 34–288 (LFAKCPACKH…HLVAFHGGGQ (255 aa)). 4 residues coordinate Zn(2+): Cys-38, Cys-41, Cys-56, and Cys-59. The C4-type zinc finger occupies 38-59 (CPACKHMIYKKDLGLAKICPTC).

Belongs to the AccD/PCCB family. As to quaternary structure, acetyl-CoA carboxylase is a heterohexamer composed of biotin carboxyl carrier protein (AccB), biotin carboxylase (AccC) and two subunits each of ACCase subunit alpha (AccA) and ACCase subunit beta (AccD). Requires Zn(2+) as cofactor.

It localises to the cytoplasm. The catalysed reaction is N(6)-carboxybiotinyl-L-lysyl-[protein] + acetyl-CoA = N(6)-biotinyl-L-lysyl-[protein] + malonyl-CoA. The protein operates within lipid metabolism; malonyl-CoA biosynthesis; malonyl-CoA from acetyl-CoA: step 1/1. In terms of biological role, component of the acetyl coenzyme A carboxylase (ACC) complex. Biotin carboxylase (BC) catalyzes the carboxylation of biotin on its carrier protein (BCCP) and then the CO(2) group is transferred by the transcarboxylase to acetyl-CoA to form malonyl-CoA. This chain is Acetyl-coenzyme A carboxylase carboxyl transferase subunit beta, found in Streptococcus pyogenes serotype M4 (strain MGAS10750).